A 530-amino-acid polypeptide reads, in one-letter code: Autoinducer-2 kinase (530 aa).

This sequence belongs to the FGGY kinase family.

The protein localises to the cytoplasm. The catalysed reaction is (S)-4,5-dihydroxypentane-2,3-dione + ATP = (2S)-2-hydroxy-3,4-dioxopentyl phosphate + ADP + H(+). Catalyzes the phosphorylation of autoinducer-2 (AI-2) to phospho-AI-2, which subsequently inactivates the transcriptional regulator LsrR and leads to the transcription of the lsr operon. Phosphorylates the ring-open form of (S)-4,5-dihydroxypentane-2,3-dione (DPD), which is the precursor to all AI-2 signaling molecules, at the C5 position. This chain is Autoinducer-2 kinase, found in Escherichia coli (strain ATCC 8739 / DSM 1576 / NBRC 3972 / NCIMB 8545 / WDCM 00012 / Crooks).